Consider the following 418-residue polypeptide: 26S proteasome regulatory subunit 6B (418 aa).

The residue at position 1 (Met1) is an N-acetylmethionine. The residue at position 21 (Ser21) is a Phosphoserine. Phosphothreonine is present on Thr25. Ser28 is modified (phosphoserine). An ATP-binding site is contributed by 206 to 213; it reads GPPGCGKT. Residues Lys397 and Lys401 each carry the N6-acetyllysine modification.

Belongs to the AAA ATPase family. As to quaternary structure, component of the 19S proteasome regulatory particle complex. The 26S proteasome consists of a 20S core particle (CP) and two 19S regulatory subunits (RP). The regulatory particle is made of a lid composed of 9 subunits, a base containing 6 ATPases including PSMC4 and few additional components. Interacts with NR1I3. Interacts with PAAF1. Interacts with TRIM5. Interacts with ZFAND1.

It localises to the cytoplasm. The protein resides in the nucleus. Functionally, component of the 26S proteasome, a multiprotein complex involved in the ATP-dependent degradation of ubiquitinated proteins. This complex plays a key role in the maintenance of protein homeostasis by removing misfolded or damaged proteins, which could impair cellular functions, and by removing proteins whose functions are no longer required. Therefore, the proteasome participates in numerous cellular processes, including cell cycle progression, apoptosis, or DNA damage repair. PSMC4 belongs to the heterohexameric ring of AAA (ATPases associated with diverse cellular activities) proteins that unfolds ubiquitinated target proteins that are concurrently translocated into a proteolytic chamber and degraded into peptides. The polypeptide is 26S proteasome regulatory subunit 6B (Psmc4) (Mus musculus (Mouse)).